A 447-amino-acid chain; its full sequence is Asparagine--tRNA ligase (447 aa).

The protein belongs to the class-II aminoacyl-tRNA synthetase family. Homodimer.

It localises to the cytoplasm. It catalyses the reaction tRNA(Asn) + L-asparagine + ATP = L-asparaginyl-tRNA(Asn) + AMP + diphosphate + H(+). The protein is Asparagine--tRNA ligase of Lactococcus lactis subsp. cremoris (strain SK11).